The sequence spans 672 residues: MEHADADRTRVAPEIGSLHDEDAEADPARAREMERLQPWREQVTARGVVAAALIGFVFSVIVMKIALTTGLVPTLNISAALLAFLALRGWTRALERLGFSPRPFTRQENTVVQTCAVACYTIAFGGGFGSTLLGLNKRTYELAGNSPGNVPGSYKEPGIGWMVGLLLAISFAGNLSLIPLRKALVVDYKLTYPSGTATAVLINGFHTAQGDKNAKLQLHGFLKYFGLSLFWSFFQWFYTGGNACGFVQFPTFGLKAWKQSFFFDFSLTYVGAGMICSHLVNLSTLLGAVISWGIMWPLISKHKGDWYPANIPESSMTSLYGYKSFLCIALIMGDGLYHFVKVTGVTAKSLHNRFNRKSVSNTASEEGDMVSLDDLQRDEVFKRGTVPSWMAYSGYFLLSIIAVITIPIMFRQVKWYYVIIAYALGPVLGFANSYGAGLTDINMGYNYGKIALFVFAAWAGKDNGVIAGLVVGTLVKQLVLVSADLMHDLKTGHLTLTSPRSMLVGELIGTGIGCFIAPLTFMLFYRAFDIGNPDGYWKAPYALIYRNMAILGIEGISALPKHCLSLSVGFFAFAVLTNVARDALPARYKKLVPLPTAMAVPFLVGASFAIDMCVGSLVLFAWNKMNKKEAAFMVPAVASGLMCGDGIWTFPSSILALAKIKPPICMKFTPGS.

The segment covering 1-11 has biased composition (basic and acidic residues); that stretch reads MEHADADRTRV. The segment at 1 to 27 is disordered; that stretch reads MEHADADRTRVAPEIGSLHDEDAEADP. 14 helical membrane-spanning segments follow: residues 47-67, 70-90, 115-135, 158-178, 218-238, 279-299, 325-345, 390-410, 418-438, 450-470, 504-524, 556-576, 602-622, and 630-650; these read GVVA…KIAL, GLVP…LRGW, CAVA…LLGL, GIGW…LSLI, LHGF…QWFY, LVNL…WPLI, FLCI…VTGV, MAYS…PIMF, VIIA…GAGL, IALF…AGLV, VGEL…FMLF, ISAL…FAVL, FLVG…LFAW, and AAFM…IWTF.

Belongs to the YSL (TC 2.A.67.2) family. Expressed in root phloem and at low levels in the shoot companion cells.

Its subcellular location is the cell membrane. Functionally, involved in Fe(3+) uptake from the rhizosphere and phloem transport of iron. Plays an important role in iron homeostasis during the early stages of growth. Transports Fe(3+)-phytosiderophore, but not Fe(3+)- or Fe(2+)-nicotianamine. May not transport other chelated metals. The protein is Iron-phytosiderophore transporter YSL15 (YSL15) of Oryza sativa subsp. japonica (Rice).